The following is a 76-amino-acid chain: Small, acid-soluble spore protein Tlp (76 aa).

Basic and acidic residues-rich tracts occupy residues 1–15 (MAKR…ERIE), 26–38 (DEAR…HSEE), and 46–76 (EIEQ…KNNS). The disordered stretch occupies residues 1–76 (MAKRDDRSNN…DEVNDQKNNS (76 aa)).

This sequence belongs to the Tlp family.

The protein resides in the spore core. This is Small, acid-soluble spore protein Tlp from Shouchella clausii (strain KSM-K16) (Alkalihalobacillus clausii).